We begin with the raw amino-acid sequence, 500 residues long: Lysine--tRNA ligase (500 aa).

E410 and E417 together coordinate Mg(2+).

Belongs to the class-II aminoacyl-tRNA synthetase family. Homodimer. Mg(2+) is required as a cofactor.

The protein localises to the cytoplasm. The enzyme catalyses tRNA(Lys) + L-lysine + ATP = L-lysyl-tRNA(Lys) + AMP + diphosphate. The sequence is that of Lysine--tRNA ligase from Shewanella oneidensis (strain ATCC 700550 / JCM 31522 / CIP 106686 / LMG 19005 / NCIMB 14063 / MR-1).